We begin with the raw amino-acid sequence, 296 residues long: GTPase Era (296 aa).

Residues K3–E170 enclose the Era-type G domain. The segment at G11–S18 is G1. G11 to S18 lines the GTP pocket. Residues Q37–N41 are G2. The tract at residues D58–G61 is G3. Residues D58–I62 and N120–D123 each bind GTP. Residues N120–D123 form a G4 region. The interval I149 to A151 is G5. One can recognise a KH type-2 domain in the interval L201–E278.

The protein belongs to the TRAFAC class TrmE-Era-EngA-EngB-Septin-like GTPase superfamily. Era GTPase family. In terms of assembly, monomer.

The protein localises to the cytoplasm. The protein resides in the cell membrane. In terms of biological role, an essential GTPase that binds both GDP and GTP, with rapid nucleotide exchange. Plays a role in 16S rRNA processing and 30S ribosomal subunit biogenesis and possibly also in cell cycle regulation and energy metabolism. In Clostridium botulinum (strain Okra / Type B1), this protein is GTPase Era.